The following is a 499-amino-acid chain: Rhamnogalacturonan I rhamnosyltransferase 1 (499 aa).

Residues 31 to 50 (WFVRVCSSILVWTCLVQLFA) form a helical; Signal-anchor for type II membrane protein membrane-spanning segment. Asn88, Asn121, and Asn207 each carry an N-linked (GlcNAc...) asparagine glycan. 261-263 (HLR) lines the substrate pocket. Residues Asn375, Asn435, and Asn496 are each glycosylated (N-linked (GlcNAc...) asparagine).

It belongs to the glycosyltransferase GT106 family.

It is found in the golgi apparatus membrane. It carries out the reaction alpha-D-galacturonosyl-[(1-&gt;2)-alpha-L-rhamnosyl-(1-&gt;4)-alpha-D-galacturonosyl](n) + UDP-beta-L-rhamnose = [(1-&gt;2)-alpha-L-rhamnosyl-(1-&gt;4)-alpha-D-galacturonosyl](n+1) + UDP + H(+). It functions in the pathway glycan metabolism; pectin biosynthesis. Its function is as follows. Glycosyltransferase involved in the formation of rhamnogalacturonan I (RG-I) oligosaccharides in the seed coat mucilage, which is a specialized cell wall with abundant RG-I. Transfers the rhamnose residue from UDP-beta-L-rhamnose to RG-I oligosaccharides. In Arabidopsis thaliana (Mouse-ear cress), this protein is Rhamnogalacturonan I rhamnosyltransferase 1.